Reading from the N-terminus, the 277-residue chain is Phosphoenolpyruvate synthase regulatory protein (277 aa).

Residue 157–164 (GVSRCGKT) coordinates ADP.

Belongs to the pyruvate, phosphate/water dikinase regulatory protein family. PSRP subfamily.

The catalysed reaction is [pyruvate, water dikinase] + ADP = [pyruvate, water dikinase]-phosphate + AMP + H(+). The enzyme catalyses [pyruvate, water dikinase]-phosphate + phosphate + H(+) = [pyruvate, water dikinase] + diphosphate. Functionally, bifunctional serine/threonine kinase and phosphorylase involved in the regulation of the phosphoenolpyruvate synthase (PEPS) by catalyzing its phosphorylation/dephosphorylation. This chain is Phosphoenolpyruvate synthase regulatory protein, found in Escherichia coli O1:K1 / APEC.